The sequence spans 327 residues: 4-diphosphocytidyl-2-C-methyl-D-erythritol kinase (327 aa).

Residue Lys-14 is part of the active site. Position 97 to 107 (97 to 107 (PDGAGLGGGSA)) interacts with ATP. The active site involves Asp-140.

This sequence belongs to the GHMP kinase family. IspE subfamily.

The enzyme catalyses 4-CDP-2-C-methyl-D-erythritol + ATP = 4-CDP-2-C-methyl-D-erythritol 2-phosphate + ADP + H(+). The protein operates within isoprenoid biosynthesis; isopentenyl diphosphate biosynthesis via DXP pathway; isopentenyl diphosphate from 1-deoxy-D-xylulose 5-phosphate: step 3/6. Functionally, catalyzes the phosphorylation of the position 2 hydroxy group of 4-diphosphocytidyl-2C-methyl-D-erythritol. The protein is 4-diphosphocytidyl-2-C-methyl-D-erythritol kinase of Oleidesulfovibrio alaskensis (strain ATCC BAA-1058 / DSM 17464 / G20) (Desulfovibrio alaskensis).